The following is a 545-amino-acid chain: Membrane protein insertase YidC (545 aa).

A helical transmembrane segment spans residues 8–28 (ILLATVLSVGILILWQVIFPK). The segment at 31 to 69 (PPKPAPTPAAEVAKPAAPAAPAPGAAAPAVPAPPPDAPE) is disordered. Low complexity predominate over residues 38–59 (PAAEVAKPAAPAAPAPGAAAPA). 5 consecutive transmembrane segments (helical) span residues 325-345 (IDYG…LYVM), 355-375 (WGVA…PLTY), 421-441 (LGGC…YAAL), 458-478 (LTAH…SFVM), and 497-517 (FFPG…TLYI).

The protein belongs to the OXA1/ALB3/YidC family. Type 1 subfamily. Interacts with the Sec translocase complex via SecD. Specifically interacts with transmembrane segments of nascent integral membrane proteins during membrane integration.

It is found in the cell inner membrane. Its function is as follows. Required for the insertion and/or proper folding and/or complex formation of integral membrane proteins into the membrane. Involved in integration of membrane proteins that insert both dependently and independently of the Sec translocase complex, as well as at least some lipoproteins. Aids folding of multispanning membrane proteins. This is Membrane protein insertase YidC from Anaeromyxobacter dehalogenans (strain 2CP-C).